A 159-amino-acid chain; its full sequence is Regulatory protein RecX (159 aa).

The protein belongs to the RecX family.

The protein resides in the cytoplasm. Modulates RecA activity. The polypeptide is Regulatory protein RecX (Ralstonia pickettii (strain 12J)).